Reading from the N-terminus, the 525-residue chain is GMP synthase [glutamine-hydrolyzing] (525 aa).

The region spanning 9–207 (RILILDFGSQ…VLTISGCEAL (199 aa)) is the Glutamine amidotransferase type-1 domain. Cys-86 functions as the Nucleophile in the catalytic mechanism. Active-site residues include His-181 and Glu-183. The GMPS ATP-PPase domain occupies 208 to 400 (WTPAKIVDDA…LGLPYDMVYR (193 aa)). ATP is bound at residue 235 to 241 (SGGVDSS).

In terms of assembly, homodimer.

The catalysed reaction is XMP + L-glutamine + ATP + H2O = GMP + L-glutamate + AMP + diphosphate + 2 H(+). Its pathway is purine metabolism; GMP biosynthesis; GMP from XMP (L-Gln route): step 1/1. Functionally, catalyzes the synthesis of GMP from XMP. In Marinobacter nauticus (strain ATCC 700491 / DSM 11845 / VT8) (Marinobacter aquaeolei), this protein is GMP synthase [glutamine-hydrolyzing].